The chain runs to 51 residues: DNA-directed RNA polymerases II, IV and V subunit 12 (51 aa).

Zn(2+) is bound by residues Cys-12, Cys-15, Cys-29, and Cys-32.

Belongs to the archaeal Rpo12/eukaryotic RPC10 RNA polymerase subunit family. As to quaternary structure, component of the RNA polymerase II, IV and V complexes. Associates with the mediator complex. Interacts with NRPD1.

It localises to the nucleus. DNA-dependent RNA polymerase catalyzes the transcription of DNA into RNA using the four ribonucleoside triphosphates as substrates. Component of RNA polymerase II which synthesizes mRNA precursors and many functional non-coding RNAs. Pol II is the central component of the basal RNA polymerase II transcription machinery. It is composed of mobile elements that move relative to each other. Component of RNA polymerases IV and V which mediate short-interfering RNAs (siRNA) accumulation and subsequent RNA-directed DNA methylation-dependent (RdDM) transcriptional gene silencing (TGS) of endogenous repeated sequences, including transposable elements. This is DNA-directed RNA polymerases II, IV and V subunit 12 (NRPB12) from Arabidopsis thaliana (Mouse-ear cress).